We begin with the raw amino-acid sequence, 447 residues long: Elongation factor 1-alpha (447 aa).

The tr-type G domain maps to 5–230 (KIHISIVVIG…DQISEPKRPS (226 aa)). The tract at residues 14–21 (GHVDSGKS) is G1. 14-21 (GHVDSGKS) contributes to the GTP binding site. Lysine 55 is modified (N6,N6-dimethyllysine). The segment at 70-74 (GITID) is G2. Lysine 79 bears the N6,N6,N6-trimethyllysine mark. Residues 91–94 (DAPG) form a G3 region. GTP contacts are provided by residues 91–95 (DAPGH) and 153–156 (NKMD). A G4 region spans residues 153-156 (NKMD). Position 187 is an N6,N6,N6-trimethyllysine (lysine 187). The segment at 194 to 196 (SGF) is G5. Position 261 is an N6-methyllysine (lysine 261). Residue glutamate 289 is modified to 5-glutamyl glycerylphosphorylethanolamine. At lysine 306 the chain carries N6,N6,N6-trimethyllysine. Glutamate 362 is modified (5-glutamyl glycerylphosphorylethanolamine). N6,N6,N6-trimethyllysine is present on lysine 396.

This sequence belongs to the TRAFAC class translation factor GTPase superfamily. Classic translation factor GTPase family. EF-Tu/EF-1A subfamily.

The protein resides in the cytoplasm. In terms of biological role, this protein promotes the GTP-dependent binding of aminoacyl-tRNA to the A-site of ribosomes during protein biosynthesis. In Daucus carota (Wild carrot), this protein is Elongation factor 1-alpha.